We begin with the raw amino-acid sequence, 346 residues long: MEDLQLVLFVLGAIAIVAVLVHGFWSIRRQQPKSLKDSPMGNFYKKQAERGEGAPKRVDADGFDADGIGAVRVRKANEAHTPEAPAFNPYLKQEAKTQPQPVEPVQVEPKPLFEQEPSMAQPDFSLQSPTAKEQHRGPKASRQEPVLQGHSANLAQAHVGQSHAAMVAQKVAEEQRAQVQMPTQTALFDDEEPYEEEQSQAVEQADDDLGEPRDVLVLHVVAKEGQQLNGAELLPCFLTLNFKYGDMNIFHRHVDNAGNGKVLFSIANMVKPGVFDPDNMEQFSTQGVVFFMTLPCYGDALMNFSIMLNSARQLADDIDAVVLDGQRQPWGEFTKQDYLHRIRANA.

The Periplasmic segment spans residues Met1–Leu6. The helical transmembrane segment at Val7–Ile27 threads the bilayer. Over Arg28–Ala346 the chain is Cytoplasmic. 2 disordered regions span residues Ala76 to Glu103 and Gln121 to Pro145.

It belongs to the ZipA family. In terms of assembly, interacts with FtsZ via their C-terminal domains.

The protein resides in the cell inner membrane. Functionally, essential cell division protein that stabilizes the FtsZ protofilaments by cross-linking them and that serves as a cytoplasmic membrane anchor for the Z ring. Also required for the recruitment to the septal ring of downstream cell division proteins. The protein is Cell division protein ZipA of Shewanella sp. (strain MR-4).